Consider the following 539-residue polypeptide: Probable malate:quinone oxidoreductase 3 (539 aa).

The interval 516 to 539 (LEPPVSPQRPESIRPADSQGVASR) is disordered.

The protein belongs to the MQO family. The cofactor is FAD.

The catalysed reaction is (S)-malate + a quinone = a quinol + oxaloacetate. The protein operates within carbohydrate metabolism; tricarboxylic acid cycle; oxaloacetate from (S)-malate (quinone route): step 1/1. The sequence is that of Probable malate:quinone oxidoreductase 3 from Pseudomonas putida (strain ATCC 47054 / DSM 6125 / CFBP 8728 / NCIMB 11950 / KT2440).